The following is a 336-amino-acid chain: G patch domain and ankyrin repeat-containing protein 1 homolog (336 aa).

ANK repeat units lie at residues 123–152 (FGWT…QVET) and 156–185 (SGNT…LEET). The G-patch domain occupies 240–286 (AKNRGLQLMVKQGWDQEHGLGPSQSGRLYPVKTVLRKQRTGLGIEQQ).

The protein is G patch domain and ankyrin repeat-containing protein 1 homolog of Drosophila melanogaster (Fruit fly).